The sequence spans 223 residues: uncharacterized protein (223 aa).

5 helical membrane-spanning segments follow: residues 28 to 48 (LSNT…GLIT), 59 to 79 (LIVQ…ITLA), 88 to 108 (AFNQ…MFFI), 128 to 148 (IVGL…VWLS), and 176 to 196 (AWAI…YMIV).

It localises to the cell membrane. This is an uncharacterized protein from Mycoplasma pneumoniae (strain ATCC 29342 / M129 / Subtype 1) (Mycoplasmoides pneumoniae).